We begin with the raw amino-acid sequence, 257 residues long: NAD-dependent protein deacylase (257 aa).

Residues 1 to 252 (MLGHAAKLLA…LRRVKDIMAE (252 aa)) form the Deacetylase sirtuin-type domain. Position 20 to 39 (20 to 39 (GAGISAESGIPTFRGRNGLW)) interacts with NAD(+). Positions 64 and 67 each coordinate substrate. Residue 98–101 (QNVD) coordinates NAD(+). Catalysis depends on His116, which acts as the Proton acceptor. Zn(2+) is bound by residues Cys124, Cys127, Cys151, and Cys154. Residues 191 to 193 (GTS), 217 to 219 (NVE), and Ala235 each bind NAD(+).

The protein belongs to the sirtuin family. Class III subfamily. The cofactor is Zn(2+).

The protein resides in the cytoplasm. It carries out the reaction N(6)-acetyl-L-lysyl-[protein] + NAD(+) + H2O = 2''-O-acetyl-ADP-D-ribose + nicotinamide + L-lysyl-[protein]. It catalyses the reaction N(6)-succinyl-L-lysyl-[protein] + NAD(+) + H2O = 2''-O-succinyl-ADP-D-ribose + nicotinamide + L-lysyl-[protein]. Its function is as follows. NAD-dependent lysine deacetylase and desuccinylase that specifically removes acetyl and succinyl groups on target proteins. Modulates the activities of several proteins which are inactive in their acylated form. Deacetylates the N-terminal lysine residue of Alba, the major archaeal chromatin protein and that, in turn, increases Alba's DNA binding affinity, thereby repressing transcription. The polypeptide is NAD-dependent protein deacylase (Thermococcus kodakarensis (strain ATCC BAA-918 / JCM 12380 / KOD1) (Pyrococcus kodakaraensis (strain KOD1))).